Here is a 200-residue protein sequence, read N- to C-terminus: ATP-dependent Clp protease proteolytic subunit (200 aa).

Catalysis depends on S101, which acts as the Nucleophile. H126 is a catalytic residue.

It belongs to the peptidase S14 family. Component of the chloroplastic Clp protease core complex.

It localises to the plastid. The protein resides in the chloroplast stroma. It catalyses the reaction Hydrolysis of proteins to small peptides in the presence of ATP and magnesium. alpha-casein is the usual test substrate. In the absence of ATP, only oligopeptides shorter than five residues are hydrolyzed (such as succinyl-Leu-Tyr-|-NHMec, and Leu-Tyr-Leu-|-Tyr-Trp, in which cleavage of the -Tyr-|-Leu- and -Tyr-|-Trp bonds also occurs).. Functionally, cleaves peptides in various proteins in a process that requires ATP hydrolysis. Has a chymotrypsin-like activity. Plays a major role in the degradation of misfolded proteins. This chain is ATP-dependent Clp protease proteolytic subunit, found in Ostreococcus tauri.